Reading from the N-terminus, the 66-residue chain is ATP synthase F(0) complex subunit 8 (66 aa).

Residues 8–24 (IWLLAVVIVLTTLMIFL) traverse the membrane as a helical segment. Position 54 is an N6-acetyllysine; alternate (Lys54). At Lys54 the chain carries N6-succinyllysine; alternate. Residue Lys57 is modified to N6-acetyllysine.

Belongs to the ATPase protein 8 family. As to quaternary structure, component of the ATP synthase complex composed at least of ATP5F1A/subunit alpha, ATP5F1B/subunit beta, ATP5MC1/subunit c (homooctomer), MT-ATP6/subunit a, MT-ATP8/subunit 8, ATP5ME/subunit e, ATP5MF/subunit f, ATP5MG/subunit g, ATP5MK/subunit k, ATP5MJ/subunit j, ATP5F1C/subunit gamma, ATP5F1D/subunit delta, ATP5F1E/subunit epsilon, ATP5PF/subunit F6, ATP5PB/subunit b, ATP5PD/subunit d, ATP5PO/subunit OSCP. ATP synthase complex consists of a soluble F(1) head domain (subunits alpha(3) and beta(3)) - the catalytic core - and a membrane F(0) domain - the membrane proton channel (subunits c, a, 8, e, f, g, k and j). These two domains are linked by a central stalk (subunits gamma, delta, and epsilon) rotating inside the F1 region and a stationary peripheral stalk (subunits F6, b, d, and OSCP). Interacts with PRICKLE3.

The protein resides in the mitochondrion membrane. Functionally, subunit 8, of the mitochondrial membrane ATP synthase complex (F(1)F(0) ATP synthase or Complex V) that produces ATP from ADP in the presence of a proton gradient across the membrane which is generated by electron transport complexes of the respiratory chain. ATP synthase complex consist of a soluble F(1) head domain - the catalytic core - and a membrane F(1) domain - the membrane proton channel. These two domains are linked by a central stalk rotating inside the F(1) region and a stationary peripheral stalk. During catalysis, ATP synthesis in the catalytic domain of F(1) is coupled via a rotary mechanism of the central stalk subunits to proton translocation. In vivo, can only synthesize ATP although its ATP hydrolase activity can be activated artificially in vitro. Part of the complex F(0) domain. The chain is ATP synthase F(0) complex subunit 8 from Mammuthus primigenius (Siberian woolly mammoth).